A 459-amino-acid chain; its full sequence is Bifunctional protein GlmU (459 aa).

The segment at 1–229 (MSNYAIILAA…FDESLGVNDR (229 aa)) is pyrophosphorylase. UDP-N-acetyl-alpha-D-glucosamine is bound by residues 8 to 11 (LAAG), Lys-22, Gln-72, and 77 to 78 (GT). Position 102 (Asp-102) interacts with Mg(2+). Positions 139, 154, 169, and 227 each coordinate UDP-N-acetyl-alpha-D-glucosamine. Residue Asn-227 participates in Mg(2+) binding. The tract at residues 230-250 (VALATAEKVMRHRIARQHMVN) is linker. Residues 251-459 (GVTVVNPDSA…NKKPHHPSQK (209 aa)) are N-acetyltransferase. Residues Arg-332 and Lys-350 each coordinate UDP-N-acetyl-alpha-D-glucosamine. Residue His-362 is the Proton acceptor of the active site. Positions 365 and 376 each coordinate UDP-N-acetyl-alpha-D-glucosamine. Acetyl-CoA is bound by residues Ala-379, 385 to 386 (NY), Ser-404, Ala-422, and Arg-439.

In the N-terminal section; belongs to the N-acetylglucosamine-1-phosphate uridyltransferase family. This sequence in the C-terminal section; belongs to the transferase hexapeptide repeat family. In terms of assembly, homotrimer. Mg(2+) serves as cofactor.

It is found in the cytoplasm. It catalyses the reaction alpha-D-glucosamine 1-phosphate + acetyl-CoA = N-acetyl-alpha-D-glucosamine 1-phosphate + CoA + H(+). The catalysed reaction is N-acetyl-alpha-D-glucosamine 1-phosphate + UTP + H(+) = UDP-N-acetyl-alpha-D-glucosamine + diphosphate. Its pathway is nucleotide-sugar biosynthesis; UDP-N-acetyl-alpha-D-glucosamine biosynthesis; N-acetyl-alpha-D-glucosamine 1-phosphate from alpha-D-glucosamine 6-phosphate (route II): step 2/2. It functions in the pathway nucleotide-sugar biosynthesis; UDP-N-acetyl-alpha-D-glucosamine biosynthesis; UDP-N-acetyl-alpha-D-glucosamine from N-acetyl-alpha-D-glucosamine 1-phosphate: step 1/1. The protein operates within bacterial outer membrane biogenesis; LPS lipid A biosynthesis. Catalyzes the last two sequential reactions in the de novo biosynthetic pathway for UDP-N-acetylglucosamine (UDP-GlcNAc). The C-terminal domain catalyzes the transfer of acetyl group from acetyl coenzyme A to glucosamine-1-phosphate (GlcN-1-P) to produce N-acetylglucosamine-1-phosphate (GlcNAc-1-P), which is converted into UDP-GlcNAc by the transfer of uridine 5-monophosphate (from uridine 5-triphosphate), a reaction catalyzed by the N-terminal domain. The polypeptide is Bifunctional protein GlmU (Streptococcus agalactiae serotype III (strain NEM316)).